Here is a 95-residue protein sequence, read N- to C-terminus: Basic phospholipase A2 (95 aa).

N6-palmitoyl lysine attachment occurs at residues K7 and K10. Y23, G25, and G27 together coordinate Ca(2+). 5 cysteine pairs are disulfide-bonded: C24-C40, C39-C77, C46-C70, C53-C63, and C57-C68. H43 is a catalytic residue. D44 provides a ligand contact to Ca(2+). Residue D71 is part of the active site.

Monomer. Ca(2+) is required as a cofactor. Expressed by the venom gland.

It is found in the secreted. It catalyses the reaction a 1,2-diacyl-sn-glycero-3-phosphocholine + H2O = a 1-acyl-sn-glycero-3-phosphocholine + a fatty acid + H(+). In terms of biological role, PLA2 catalyzes the calcium-dependent hydrolysis of the 2-acyl groups in 3-sn-phosphoglycerides. Induces local and systemic myotoxicity in an intramuscular mouse model. Induces local edema in a mouse footpad assay. Does not exhibit any anticoagulant effects. Does not mediate an antibacterial effect against Gram-negative and Gram-positive bacteria. This is Basic phospholipase A2 from Agkistrodon piscivorus leucostoma (Western cottonmouth).